The primary structure comprises 334 residues: Glycerol-3-phosphate dehydrogenase [NAD(P)+] (334 aa).

Residues S14, Y15, R35, and K109 each coordinate NADPH. The sn-glycerol 3-phosphate site is built by K109, G138, and T140. A142 provides a ligand contact to NADPH. Positions 194, 247, 257, 258, and 259 each coordinate sn-glycerol 3-phosphate. The active-site Proton acceptor is the K194. Position 258 (R258) interacts with NADPH. NADPH-binding residues include V282 and E284.

This sequence belongs to the NAD-dependent glycerol-3-phosphate dehydrogenase family.

It localises to the cytoplasm. The catalysed reaction is sn-glycerol 3-phosphate + NAD(+) = dihydroxyacetone phosphate + NADH + H(+). The enzyme catalyses sn-glycerol 3-phosphate + NADP(+) = dihydroxyacetone phosphate + NADPH + H(+). It functions in the pathway membrane lipid metabolism; glycerophospholipid metabolism. Catalyzes the reduction of the glycolytic intermediate dihydroxyacetone phosphate (DHAP) to sn-glycerol 3-phosphate (G3P), the key precursor for phospholipid synthesis. The sequence is that of Glycerol-3-phosphate dehydrogenase [NAD(P)+] from Colwellia psychrerythraea (strain 34H / ATCC BAA-681) (Vibrio psychroerythus).